Reading from the N-terminus, the 242-residue chain is MGNKIHPTGLRLGITQEHRSRWYATSKMYPILLQEDDRIRRFIHKKYGAAGISDVLIARKADQLEVELKTARPGVLVGRQGSGIEELRTGIQKTIGDHSRQVRINVVEVERVDADAFLLAEYIAQQLEKRVAFRRTIRMAVQRAQRAGVLGLKIQVGGRLNGAEIARNEWTREGRVPLHTLRAEIDYATKVASTTYGVLGIKVWIFKGEVLGDEAQSMPVGASPRRRGNRRPQQFEDRSNEG.

Residues 39 to 110 form the KH type-2 domain; that stretch reads IRRFIHKKYG…QVRINVVEVE (72 aa). The disordered stretch occupies residues 216-242; the sequence is QSMPVGASPRRRGNRRPQQFEDRSNEG. The segment covering 233 to 242 has biased composition (basic and acidic residues); it reads QQFEDRSNEG.

It belongs to the universal ribosomal protein uS3 family. As to quaternary structure, part of the 30S ribosomal subunit. Forms a tight complex with proteins S10 and S14.

In terms of biological role, binds the lower part of the 30S subunit head. Binds mRNA in the 70S ribosome, positioning it for translation. This Prochlorococcus marinus (strain MIT 9303) protein is Small ribosomal subunit protein uS3.